The chain runs to 545 residues: DNA mismatch repair protein MutL (545 aa).

Positions 516–545 (GRRSGARGGGEARPRPQEESFPEAPLPREP) are disordered.

The protein belongs to the DNA mismatch repair MutL/HexB family.

Functionally, this protein is involved in the repair of mismatches in DNA. It is required for dam-dependent methyl-directed DNA mismatch repair. May act as a 'molecular matchmaker', a protein that promotes the formation of a stable complex between two or more DNA-binding proteins in an ATP-dependent manner without itself being part of a final effector complex. The chain is DNA mismatch repair protein MutL from Thermus thermophilus (strain ATCC BAA-163 / DSM 7039 / HB27).